The chain runs to 521 residues: Bifunctional purine biosynthesis protein PurH (521 aa).

The MGS-like domain maps to 1–145; that stretch reads MIKQALISVS…KNHRDVTVVV (145 aa).

This sequence belongs to the PurH family.

The enzyme catalyses (6R)-10-formyltetrahydrofolate + 5-amino-1-(5-phospho-beta-D-ribosyl)imidazole-4-carboxamide = 5-formamido-1-(5-phospho-D-ribosyl)imidazole-4-carboxamide + (6S)-5,6,7,8-tetrahydrofolate. The catalysed reaction is IMP + H2O = 5-formamido-1-(5-phospho-D-ribosyl)imidazole-4-carboxamide. The protein operates within purine metabolism; IMP biosynthesis via de novo pathway; 5-formamido-1-(5-phospho-D-ribosyl)imidazole-4-carboxamide from 5-amino-1-(5-phospho-D-ribosyl)imidazole-4-carboxamide (10-formyl THF route): step 1/1. Its pathway is purine metabolism; IMP biosynthesis via de novo pathway; IMP from 5-formamido-1-(5-phospho-D-ribosyl)imidazole-4-carboxamide: step 1/1. The polypeptide is Bifunctional purine biosynthesis protein PurH (Burkholderia lata (strain ATCC 17760 / DSM 23089 / LMG 22485 / NCIMB 9086 / R18194 / 383)).